The sequence spans 344 residues: Methionine import ATP-binding protein MetN (344 aa).

Positions 2 to 241 (IELKNIGKQF…PTTQLAQQFI (240 aa)) constitute an ABC transporter domain. 38–45 (GASGAGKS) serves as a coordination point for ATP.

This sequence belongs to the ABC transporter superfamily. Methionine importer (TC 3.A.1.24) family. As to quaternary structure, the complex is composed of two ATP-binding proteins (MetN), two transmembrane proteins (MetI) and a solute-binding protein (MetQ).

The protein localises to the cell inner membrane. It catalyses the reaction L-methionine(out) + ATP + H2O = L-methionine(in) + ADP + phosphate + H(+). The catalysed reaction is D-methionine(out) + ATP + H2O = D-methionine(in) + ADP + phosphate + H(+). Part of the ABC transporter complex MetNIQ involved in methionine import. Responsible for energy coupling to the transport system. The chain is Methionine import ATP-binding protein MetN from Haemophilus ducreyi (strain 35000HP / ATCC 700724).